A 443-amino-acid polypeptide reads, in one-letter code: Chromosomal replication initiator protein DnaA (443 aa).

The tract at residues 1 to 73 (MYGDYRQIWE…YDAASKVTNR (73 aa)) is domain I, interacts with DnaA modulators. Residues 73 to 106 (RFIEIKILSEDEEEYREIKESIERENSSESTLLS) form a domain II region. The segment at 107 to 323 (TLNPKYTFDT…GALIRIVAFA (217 aa)) is domain III, AAA+ region. ATP-binding residues include Gly151, Gly153, Lys154, and Thr155. The domain IV, binds dsDNA stretch occupies residues 324–443 (TLTKSNIDLE…EELKKRIKGY (120 aa)).

The protein belongs to the DnaA family. As to quaternary structure, oligomerizes as a right-handed, spiral filament on DNA at oriC.

It is found in the cytoplasm. Its function is as follows. Plays an essential role in the initiation and regulation of chromosomal replication. ATP-DnaA binds to the origin of replication (oriC) to initiate formation of the DNA replication initiation complex once per cell cycle. Binds the DnaA box (a 9 base pair repeat at the origin) and separates the double-stranded (ds)DNA. Forms a right-handed helical filament on oriC DNA; dsDNA binds to the exterior of the filament while single-stranded (ss)DNA is stabiized in the filament's interior. The ATP-DnaA-oriC complex binds and stabilizes one strand of the AT-rich DNA unwinding element (DUE), permitting loading of DNA polymerase. After initiation quickly degrades to an ADP-DnaA complex that is not apt for DNA replication. Binds acidic phospholipids. The polypeptide is Chromosomal replication initiator protein DnaA (Caldanaerobacter subterraneus subsp. tengcongensis (strain DSM 15242 / JCM 11007 / NBRC 100824 / MB4) (Thermoanaerobacter tengcongensis)).